We begin with the raw amino-acid sequence, 158 residues long: MIYLPLLLAEEIEGGLFDFNGTLPLMALQFLILMLLLNTIFYKPVTKILDERDEYIRTTLTTASSMLVKADELAAKYEEDLSKARRDAQAKIAASQKDAQSIVSEDIKKAQMNAEKLITEASKQLNIQKEEALKTLEDQVDTLSDQIKTKLLSSQSLK.

A helical membrane pass occupies residues 21–41 (GTLPLMALQFLILMLLLNTIF).

The protein belongs to the ATPase B chain family. As to quaternary structure, F-type ATPases have 2 components, F(1) - the catalytic core - and F(0) - the membrane proton channel. F(1) has five subunits: alpha(3), beta(3), gamma(1), delta(1), epsilon(1). F(0) has four main subunits: a(1), b(1), b'(1) and c(10-14). The alpha and beta chains form an alternating ring which encloses part of the gamma chain. F(1) is attached to F(0) by a central stalk formed by the gamma and epsilon chains, while a peripheral stalk is formed by the delta, b and b' chains.

The protein localises to the plastid. The protein resides in the chloroplast thylakoid membrane. F(1)F(0) ATP synthase produces ATP from ADP in the presence of a proton or sodium gradient. F-type ATPases consist of two structural domains, F(1) containing the extramembraneous catalytic core and F(0) containing the membrane proton channel, linked together by a central stalk and a peripheral stalk. During catalysis, ATP synthesis in the catalytic domain of F(1) is coupled via a rotary mechanism of the central stalk subunits to proton translocation. In terms of biological role, component of the F(0) channel, it forms part of the peripheral stalk, linking F(1) to F(0). The b'-subunit is a diverged and duplicated form of b found in plants and photosynthetic bacteria. The polypeptide is ATP synthase subunit b', chloroplastic (Porphyra purpurea (Red seaweed)).